Consider the following 717-residue polypeptide: Fatty acid oxidation complex subunit alpha (717 aa).

Residues 1 to 190 are enoyl-CoA hydratase/isomerase; it reads MIHAGNAITV…KDGAVDAVVA (190 aa). D298 contributes to the substrate binding site. Residues 313 to 717 are 3-hydroxyacyl-CoA dehydrogenase; that stretch reads HPVNQAAVLG…MAANNKKFYG (405 aa). Residues M326, D345, 402–404, K409, and S431 each bind NAD(+); that span reads VTE. H452 serves as the catalytic For 3-hydroxyacyl-CoA dehydrogenase activity. An NAD(+)-binding site is contributed by N455. N502 contributes to the substrate binding site.

The protein in the N-terminal section; belongs to the enoyl-CoA hydratase/isomerase family. It in the C-terminal section; belongs to the 3-hydroxyacyl-CoA dehydrogenase family. In terms of assembly, heterotetramer of two alpha chains (FadB) and two beta chains (FadA).

The catalysed reaction is a (3S)-3-hydroxyacyl-CoA + NAD(+) = a 3-oxoacyl-CoA + NADH + H(+). The enzyme catalyses a (3S)-3-hydroxyacyl-CoA = a (2E)-enoyl-CoA + H2O. It catalyses the reaction a 4-saturated-(3S)-3-hydroxyacyl-CoA = a (3E)-enoyl-CoA + H2O. It carries out the reaction (3S)-3-hydroxybutanoyl-CoA = (3R)-3-hydroxybutanoyl-CoA. The catalysed reaction is a (3Z)-enoyl-CoA = a 4-saturated (2E)-enoyl-CoA. The enzyme catalyses a (3E)-enoyl-CoA = a 4-saturated (2E)-enoyl-CoA. It participates in lipid metabolism; fatty acid beta-oxidation. Functionally, involved in the aerobic and anaerobic degradation of long-chain fatty acids via beta-oxidation cycle. Catalyzes the formation of 3-oxoacyl-CoA from enoyl-CoA via L-3-hydroxyacyl-CoA. It can also use D-3-hydroxyacyl-CoA and cis-3-enoyl-CoA as substrate. This chain is Fatty acid oxidation complex subunit alpha, found in Acinetobacter baumannii (strain AB307-0294).